A 239-amino-acid chain; its full sequence is Succinate dehydrogenase [ubiquinone] iron-sulfur subunit (239 aa).

Positions 11-100 constitute a 2Fe-2S ferredoxin-type domain; that stretch reads FKVYRWNPDK…EMKIYPLPHM (90 aa). Positions 61, 66, 69, and 81 each coordinate [2Fe-2S] cluster. Residues 141–171 form the 4Fe-4S ferredoxin-type domain; it reads DREKLDGLYECVLCACCSTSCPSYWWNSDKY. Positions 151, 154, and 157 each coordinate [4Fe-4S] cluster. C161 provides a ligand contact to [3Fe-4S] cluster. Position 166 (W166) interacts with a ubiquinone. [3Fe-4S] cluster contacts are provided by C208 and C214. C218 serves as a coordination point for [4Fe-4S] cluster.

It belongs to the succinate dehydrogenase/fumarate reductase iron-sulfur protein family. In terms of assembly, component of complex II composed of four subunits: a flavoprotein (FP), an iron-sulfur protein (IP), and a cytochrome b composed of a large and a small subunit. Requires [2Fe-2S] cluster as cofactor. [3Fe-4S] cluster is required as a cofactor. The cofactor is [4Fe-4S] cluster.

The protein resides in the mitochondrion inner membrane. The enzyme catalyses a quinone + succinate = fumarate + a quinol. Its pathway is carbohydrate metabolism; tricarboxylic acid cycle; fumarate from succinate (eukaryal route): step 1/1. In terms of biological role, iron-sulfur protein (IP) subunit of succinate dehydrogenase (SDH) that is involved in complex II of the mitochondrial electron transport chain and is responsible for transferring electrons from succinate to ubiquinone (coenzyme Q). The sequence is that of Succinate dehydrogenase [ubiquinone] iron-sulfur subunit (SDH2) from Reclinomonas americana.